The chain runs to 298 residues: Elongation factor Ts (298 aa).

The segment at 78–81 is involved in Mg(2+) ion dislocation from EF-Tu; it reads TDFV.

It belongs to the EF-Ts family.

Its subcellular location is the cytoplasm. Functionally, associates with the EF-Tu.GDP complex and induces the exchange of GDP to GTP. It remains bound to the aminoacyl-tRNA.EF-Tu.GTP complex up to the GTP hydrolysis stage on the ribosome. The sequence is that of Elongation factor Ts from Mycoplasmopsis agalactiae (strain NCTC 10123 / CIP 59.7 / PG2) (Mycoplasma agalactiae).